Here is a 496-residue protein sequence, read N- to C-terminus: UDP-N-acetylmuramoyl-L-alanyl-D-glutamate--2,6-diaminopimelate ligase (496 aa).

UDP-N-acetyl-alpha-D-muramoyl-L-alanyl-D-glutamate contacts are provided by leucine 24 and serine 26. 109–115 (GTNGKTS) contacts ATP. UDP-N-acetyl-alpha-D-muramoyl-L-alanyl-D-glutamate-binding positions include 151–152 (TT), serine 178, glutamine 184, and arginine 186. Lysine 218 bears the N6-carboxylysine mark. Residues arginine 387, 411 to 414 (DNPR), glycine 462, and glutamate 466 contribute to the meso-2,6-diaminopimelate site. The Meso-diaminopimelate recognition motif signature appears at 411–414 (DNPR).

It belongs to the MurCDEF family. MurE subfamily. It depends on Mg(2+) as a cofactor. Post-translationally, carboxylation is probably crucial for Mg(2+) binding and, consequently, for the gamma-phosphate positioning of ATP.

The protein localises to the cytoplasm. The enzyme catalyses UDP-N-acetyl-alpha-D-muramoyl-L-alanyl-D-glutamate + meso-2,6-diaminopimelate + ATP = UDP-N-acetyl-alpha-D-muramoyl-L-alanyl-gamma-D-glutamyl-meso-2,6-diaminopimelate + ADP + phosphate + H(+). It participates in cell wall biogenesis; peptidoglycan biosynthesis. In terms of biological role, catalyzes the addition of meso-diaminopimelic acid to the nucleotide precursor UDP-N-acetylmuramoyl-L-alanyl-D-glutamate (UMAG) in the biosynthesis of bacterial cell-wall peptidoglycan. The chain is UDP-N-acetylmuramoyl-L-alanyl-D-glutamate--2,6-diaminopimelate ligase from Pseudomonas putida (strain ATCC 47054 / DSM 6125 / CFBP 8728 / NCIMB 11950 / KT2440).